We begin with the raw amino-acid sequence, 398 residues long: Succinate--CoA ligase [ADP-forming] subunit beta (398 aa).

The ATP-grasp domain occupies lysine 9–glutamate 253. Residues lysine 46, glycine 53–glycine 55, glutamate 108, cysteine 111, and glutamate 116 contribute to the ATP site. Residues asparagine 208 and aspartate 222 each contribute to the Mg(2+) site. Substrate is bound by residues asparagine 273 and glycine 330 to methionine 332.

The protein belongs to the succinate/malate CoA ligase beta subunit family. As to quaternary structure, heterotetramer of two alpha and two beta subunits. Mg(2+) is required as a cofactor.

It carries out the reaction succinate + ATP + CoA = succinyl-CoA + ADP + phosphate. It catalyses the reaction GTP + succinate + CoA = succinyl-CoA + GDP + phosphate. Its pathway is carbohydrate metabolism; tricarboxylic acid cycle; succinate from succinyl-CoA (ligase route): step 1/1. In terms of biological role, succinyl-CoA synthetase functions in the citric acid cycle (TCA), coupling the hydrolysis of succinyl-CoA to the synthesis of either ATP or GTP and thus represents the only step of substrate-level phosphorylation in the TCA. The beta subunit provides nucleotide specificity of the enzyme and binds the substrate succinate, while the binding sites for coenzyme A and phosphate are found in the alpha subunit. The sequence is that of Succinate--CoA ligase [ADP-forming] subunit beta from Paramagnetospirillum magneticum (strain ATCC 700264 / AMB-1) (Magnetospirillum magneticum).